A 242-amino-acid chain; its full sequence is tRNA pseudouridine synthase A (242 aa).

The active-site Nucleophile is D51. Y107 provides a ligand contact to substrate.

The protein belongs to the tRNA pseudouridine synthase TruA family. Homodimer.

It carries out the reaction uridine(38/39/40) in tRNA = pseudouridine(38/39/40) in tRNA. Its function is as follows. Formation of pseudouridine at positions 38, 39 and 40 in the anticodon stem and loop of transfer RNAs. The sequence is that of tRNA pseudouridine synthase A from Helicobacter pylori (strain J99 / ATCC 700824) (Campylobacter pylori J99).